The following is a 90-amino-acid chain: Conotoxin ba9a (90 aa).

The signal sequence occupies residues 1–27 (MHLSLARSAGLMWLLLFAVGNFVGVQP). A propeptide spanning residues 28-62 (GQITRDVDNGQLADNRRNLQSLRKPMTLFKSLNKR) is cleaved from the precursor. The residue at position 67 (Glu-67) is a 4-carboxyglutamate. Residues Pro-76 and Pro-80 each carry the 4-hydroxyproline modification.

Expressed by the venom duct.

The protein localises to the secreted. In Conus bayani (Bayan's cone), this protein is Conotoxin ba9a.